The following is a 940-amino-acid chain: Isoleucine--tRNA ligase (940 aa).

The 'HIGH' region signature appears at 58–68; sequence PYANGSIHIGH. Residue Glu-563 participates in L-isoleucyl-5'-AMP binding. The short motif at 604–608 is the 'KMSKS' region element; it reads KMSKS. Lys-607 contacts ATP. Cys-902, Cys-905, Cys-922, and Cys-925 together coordinate Zn(2+).

The protein belongs to the class-I aminoacyl-tRNA synthetase family. IleS type 1 subfamily. Monomer. It depends on Zn(2+) as a cofactor.

It localises to the cytoplasm. The catalysed reaction is tRNA(Ile) + L-isoleucine + ATP = L-isoleucyl-tRNA(Ile) + AMP + diphosphate. Its function is as follows. Catalyzes the attachment of isoleucine to tRNA(Ile). As IleRS can inadvertently accommodate and process structurally similar amino acids such as valine, to avoid such errors it has two additional distinct tRNA(Ile)-dependent editing activities. One activity is designated as 'pretransfer' editing and involves the hydrolysis of activated Val-AMP. The other activity is designated 'posttransfer' editing and involves deacylation of mischarged Val-tRNA(Ile). The sequence is that of Isoleucine--tRNA ligase from Marinomonas sp. (strain MWYL1).